Reading from the N-terminus, the 593-residue chain is Solute carrier family 40 member 3, chloroplastic (593 aa).

A disordered region spans residues 1-23 (MSMSKLLSPPPTSPPGPALSRLP). The N-terminal 51 residues, 1–51 (MSMSKLLSPPPTSPPGPALSRLPCRRVAPPPVLPFPFPLRRLTSRRVFATS), are a transit peptide targeting the chloroplast. Pro residues predominate over residues 8-17 (SPPPTSPPGP). Helical transmembrane passes span 181 to 201 (ILPV…AGPL), 219 to 239 (AAIQ…AFAV), 253 to 273 (FAVL…LGII), 303 to 322 (LLCE…KNNP), 323 to 343 (LTCI…LIFL), 403 to 423 (YVFV…TFLI), 431 to 451 (VIGA…FATA), 462 to 482 (AGAA…VVYL), 493 to 513 (LFAF…YSAI), 530 to 550 (IGAT…AVAV), and 557 to 577 (HFGA…GMYC).

Belongs to the ferroportin (FP) (TC 2.A.100) family. SLC40A subfamily.

The protein resides in the membrane. Its subcellular location is the plastid. It localises to the chloroplast envelope. May be involved in iron transport and iron homeostasis. This Oryza sativa subsp. japonica (Rice) protein is Solute carrier family 40 member 3, chloroplastic.